A 330-amino-acid chain; its full sequence is Probable WRKY transcription factor 39 (330 aa).

Positions 256–322 (KIADIPPDEY…YEGEHNHSRI (67 aa)) form a DNA-binding region, WRKY.

It localises to the nucleus. Transcription factor. Interacts specifically with the W box (5'-(T)TGAC[CT]-3'), a frequently occurring elicitor-responsive cis-acting element. The chain is Probable WRKY transcription factor 39 (WRKY39) from Arabidopsis thaliana (Mouse-ear cress).